Reading from the N-terminus, the 505-residue chain is Olfactomedin-4 (505 aa).

The first 18 residues, 1–18 (MSYSLLFLLALQFCLGSA), serve as a signal peptide directing secretion. Residues Asn64 and Asn128 are each glycosylated (N-linked (GlcNAc...) asparagine). Residues 174–225 (HIIDMLEVEIRNMTLLVEKLESLDQNNVLSIRRQILALKTKLKECEASKSDL) adopt a coiled-coil conformation. Residues 237 to 499 (SCSHGGVVNI…LLNYDLVFLQ (263 aa)) enclose the Olfactomedin-like domain. Cys238 and Cys429 are oxidised to a cystine.

Homomultimer; disulfide-linked. Interacts with NDUFA13. Interacts with cell surface lectins (locutions ricinus communis agglutinin I, concanavalin A and wheat germ agglutinin) and cadherin. Post-translationally, N-glycosylated.

The protein resides in the secreted. Its subcellular location is the extracellular space. The protein localises to the mitochondrion. In terms of biological role, may promote proliferation of pancreatic cancer cells by favoring the transition from the S to G2/M phase. In myeloid leukemic cell lines, inhibits cell growth and induces cell differentiation and apoptosis. May play a role in the inhibition of EIF4EBP1 phosphorylation/deactivation. Facilitates cell adhesion, most probably through interaction with cell surface lectins and cadherin. The sequence is that of Olfactomedin-4 (Olfm4) from Mus musculus (Mouse).